An 83-amino-acid polypeptide reads, in one-letter code: uncharacterized protein (83 aa).

Residues 50–70 (IMVFLGEAWIILIPFAIFCII) form a helical membrane-spanning segment.

The protein belongs to the plectrovirus ORF7 family.

Its subcellular location is the host membrane. This is an uncharacterized protein from Spiroplasma citri (SpV1).